Here is a 348-residue protein sequence, read N- to C-terminus: MLCPWRTANLGLLLILTIFLVAEAEGAAQPNNSLMLQTSKENHALASSSLCMDEKQITQNYSKVLAEVNTSWPVKMATNAVLCCPPIALRNLIIITWEIILRGQPSCTKAYKKETNETKETNCTDERITWVSRPDQNSDLQIRTVAITHDGYYRCIMVTPDGNFHRGYHLQVLVTPEVTLFQNRNRTAVCKAVAGKPAAHISWIPEGDCATKQEYWSNGTVTVKSTCHWEVHNVSTVTCHVSHLTGNKSLYIELLPVPGAKKSAKLYIPYIILTIIILTIVGFIWLLKVNGCRKYKLNKTESTPVVEEDEMQPYASYTEKNNPLYDTTNKVKASEALQSEVDTDLHTL.

Positions 1 to 24 (MLCPWRTANLGLLLILTIFLVAEA) are cleaved as a signal peptide. The Extracellular segment spans residues 29-265 (QPNNSLMLQT…PVPGAKKSAK (237 aa)). Residues Asn-31, Asn-60, Asn-69, Asn-116, Asn-122, Asn-185, Asn-218, Asn-233, and Asn-247 are each glycosylated (N-linked (GlcNAc...) asparagine). 2 cysteine pairs are disulfide-bonded: Cys-83–Cys-155 and Cys-107–Cys-123. In terms of domain architecture, Ig-like C2-type spans 160-251 (PDGNFHRGYH…SHLTGNKSLY (92 aa)). Disulfide bonds link Cys-190/Cys-239 and Cys-209/Cys-227. Residues 266–286 (LYIPYIILTIIILTIVGFIWL) traverse the membrane as a helical segment. The Cytoplasmic segment spans residues 287 to 348 (LKVNGCRKYK…SEVDTDLHTL (62 aa)).

It belongs to the CD200R family. As to quaternary structure, CD200 and CD200R1 interact via their respective N-terminal Ig-like domains. Interacts with Human herpesvirus 8 vOX2 protein. In terms of assembly, (Microbial infection) Interacts with human herpesvirus 8/HHV-8 protein vOX2/K14. As to expression, expressed in granulocytes, monocytes, most T-cells, neutrophils, basophils and a subset of NK, NKT and B-cells (at protein level). Expressed in bone marrow, lymph nodes, spleen, lung, liver, spinal cord, kidney. Expressed in monocyte-derived dendritic and mast cells.

It is found in the cell membrane. It localises to the secreted. In terms of biological role, inhibitory receptor for the CD200/OX2 cell surface glycoprotein. Limits inflammation by inhibiting the expression of pro-inflammatory molecules including TNF-alpha, interferons, and inducible nitric oxide synthase (iNOS) in response to selected stimuli. Also binds to HHV-8 K14 viral CD200 homolog with identical affinity and kinetics as the host CD200. In Homo sapiens (Human), this protein is Cell surface glycoprotein CD200 receptor 1 (CD200R1).